Here is a 1872-residue protein sequence, read N- to C-terminus: Ral GTPase-activating protein subunit alpha-2 (1872 aa).

Phosphoserine is present on residues Ser-373, Ser-376, and Ser-379. Residues 446 to 469 are compositionally biased toward basic and acidic residues; sequence DKKDVAEEDADKLGLSETDSKEVS. A disordered region spans residues 446–481; sequence DKKDVAEEDADKLGLSETDSKEVSSESSGHKRSSSW. Phosphoserine occurs at positions 486 and 696. Disordered regions lie at residues 711–730 and 758–849; these read FRSATTSGAPGVEKARNTVR and QPVP…TGSD. Phosphothreonine; by PKB is present on Thr-715. Polar residues predominate over residues 775–795; that stretch reads SDSSQGQKVENSQNLSSSEPK. The segment covering 796–810 has biased composition (basic and acidic residues); the sequence is SVQESKGHVTHEHEG. Ser-819 and Ser-820 each carry phosphoserine. The span at 824–843 shows a compositional bias: basic and acidic residues; sequence LDLKEESQQTHGRCRERQKS. At Ser-1592 the chain carries Phosphoserine. The 209-residue stretch at 1634–1842 folds into the Rap-GAP domain; that stretch reads LKNLDSRQCR…EERALYLEAI (209 aa).

In terms of assembly, component of the heterodimeric RalGAP2 complex with RALGAPB. Heterodimerization is required for activity. As to expression, highly expressed in lung, liver, testis and thymus with lower levels in brain and heart (at protein level).

It is found in the cytoplasm. Its function is as follows. Catalytic subunit of the heterodimeric RalGAP2 complex which acts as a GTPase activator for the Ras-like small GTPases RALA and RALB. The protein is Ral GTPase-activating protein subunit alpha-2 of Rattus norvegicus (Rat).